A 121-amino-acid chain; its full sequence is Cell division protein FtsL (121 aa).

The Cytoplasmic portion of the chain corresponds to 1 to 34; the sequence is MISRVTEALSKVKGSIGSNERHALPGVIGDDLLR. Residues 35 to 57 traverse the membrane as a helical segment; it reads FGKLPLCLFICIILTAVTVVTTA. Topologically, residues 58-121 are periplasmic; the sequence is HHTRLLTAQR…PSQENIVVQK (64 aa).

Belongs to the FtsL family. Part of a complex composed of FtsB, FtsL and FtsQ.

The protein resides in the cell inner membrane. In terms of biological role, essential cell division protein. May link together the upstream cell division proteins, which are predominantly cytoplasmic, with the downstream cell division proteins, which are predominantly periplasmic. The protein is Cell division protein FtsL of Salmonella typhimurium (strain LT2 / SGSC1412 / ATCC 700720).